The following is a 338-amino-acid chain: Replication factor C subunit 3 (338 aa).

57-64 (GPPGTGKT) provides a ligand contact to ATP.

Belongs to the activator 1 small subunits family. In terms of assembly, heteropentamer of subunits RFC1, RFC2, RFC3, RFC4 and RFC5 that forms a complex with PCNA in the presence of ATP.

It localises to the nucleus. The elongation of primed DNA templates by DNA polymerase delta and epsilon requires the action of the accessory proteins proliferating cell nuclear antigen (PCNA) and activator 1. Subunit 3 binds ATP. The chain is Replication factor C subunit 3 (RFC3) from Blastobotrys adeninivorans (Yeast).